The sequence spans 368 residues: GDP-fucose transporter 1 (368 aa).

The next 9 helical transmembrane spans lie at Leu64 to Leu84, Leu98 to Ile118, Val141 to Tyr161, Phe166 to Leu186, Thr195 to Phe215, Trp217 to Val237, Leu251 to Gly271, Phe287 to Met307, and Ala332 to Ile352.

Belongs to the TPT transporter family. SLC35C subfamily.

It is found in the golgi apparatus membrane. It carries out the reaction GMP(out) + GDP-beta-L-fucose(in) = GMP(in) + GDP-beta-L-fucose(out). Its function is as follows. Antiporter specific for GDP-l-fucose and depending on the concomitant reverse transport of GMP. Involved in GDP-fucose import from the cytoplasm into the Golgi lumen. In Dictyostelium discoideum (Social amoeba), this protein is GDP-fucose transporter 1 (slc35c1).